A 563-amino-acid chain; its full sequence is Ribulokinase (563 aa).

This sequence belongs to the ribulokinase family.

It carries out the reaction D-ribulose + ATP = D-ribulose 5-phosphate + ADP + H(+). It catalyses the reaction L-ribulose + ATP = L-ribulose 5-phosphate + ADP + H(+). Its pathway is carbohydrate degradation; L-arabinose degradation via L-ribulose; D-xylulose 5-phosphate from L-arabinose (bacterial route): step 2/3. The polypeptide is Ribulokinase (Mycolicibacterium smegmatis (Mycobacterium smegmatis)).